The chain runs to 456 residues: Serine--tRNA ligase (456 aa).

Disordered regions lie at residues 107-130 (PHSSVPEGRSESDNREVRRWGTPP) and 229-253 (FLENQPVAATLPSNSNSPQGGQDDD). Over residues 114 to 125 (GRSESDNREVRR) the composition is skewed to basic and acidic residues. The span at 239-248 (LPSNSNSPQG) shows a compositional bias: polar residues. 260–262 (TSE) contacts L-serine. 291-293 (RSE) is a binding site for ATP. Glutamate 314 serves as a coordination point for L-serine. An ATP-binding site is contributed by 378–381 (EISS). Position 413 (serine 413) interacts with L-serine.

It belongs to the class-II aminoacyl-tRNA synthetase family. Type-1 seryl-tRNA synthetase subfamily. Homodimer. The tRNA molecule binds across the dimer.

It localises to the cytoplasm. It carries out the reaction tRNA(Ser) + L-serine + ATP = L-seryl-tRNA(Ser) + AMP + diphosphate + H(+). The catalysed reaction is tRNA(Sec) + L-serine + ATP = L-seryl-tRNA(Sec) + AMP + diphosphate + H(+). Its pathway is aminoacyl-tRNA biosynthesis; selenocysteinyl-tRNA(Sec) biosynthesis; L-seryl-tRNA(Sec) from L-serine and tRNA(Sec): step 1/1. In terms of biological role, catalyzes the attachment of serine to tRNA(Ser). Is also able to aminoacylate tRNA(Sec) with serine, to form the misacylated tRNA L-seryl-tRNA(Sec), which will be further converted into selenocysteinyl-tRNA(Sec). This Nitrosospira multiformis (strain ATCC 25196 / NCIMB 11849 / C 71) protein is Serine--tRNA ligase.